The sequence spans 100 residues: Urease subunit gamma (100 aa).

Belongs to the urease gamma subunit family. In terms of assembly, heterotrimer of UreA (gamma), UreB (beta) and UreC (alpha) subunits. Three heterotrimers associate to form the active enzyme.

It localises to the cytoplasm. It catalyses the reaction urea + 2 H2O + H(+) = hydrogencarbonate + 2 NH4(+). It participates in nitrogen metabolism; urea degradation; CO(2) and NH(3) from urea (urease route): step 1/1. This chain is Urease subunit gamma, found in Corynebacterium urealyticum (strain ATCC 43042 / DSM 7109).